A 111-amino-acid polypeptide reads, in one-letter code: Large ribosomal subunit protein P2B (111 aa).

The segment at 62 to 111 (LASVPSGGAAAGGASASTGAAAGGAAEAEEEKEEEAKEESDDDMGFGLFD) is disordered. Low complexity predominate over residues 67-87 (SGGAAAGGASASTGAAAGGAA). Residues 88–105 (EAEEEKEEEAKEESDDDM) are compositionally biased toward acidic residues. Serine 101 is subject to Phosphoserine.

This sequence belongs to the eukaryotic ribosomal protein P1/P2 family.

In terms of biological role, plays an important role in the elongation step of protein synthesis. In Candida albicans (Yeast), this protein is Large ribosomal subunit protein P2B (RPP2B).